Consider the following 302-residue polypeptide: Recombination-associated protein RdgC (302 aa).

This sequence belongs to the RdgC family.

Its subcellular location is the cytoplasm. It localises to the nucleoid. Functionally, may be involved in recombination. The sequence is that of Recombination-associated protein RdgC from Xanthomonas campestris pv. campestris (strain 8004).